The primary structure comprises 372 residues: MLDLSLIMLGAGNSTRFGLQSKKQWLRTGDDPLWLYATKNISSNYLFKDVIVVSNECEYMRKFSSHFKFIKGGETRQDSLRNAISNINSEFVMVSDIARADIPKELITKLIESAHNADCIVPALKISDSVIYQNEYINRDELKLIQTPQLSRTNMLKKALKTDNIFTDDSSAIKAIGGTVWYIEGDERAKKLTYKDDLKRLNLNSPSNDIFCGNGFDVHAFKEGDFITLCGVKIPYSKAFIAHSDGDVALHALCDALLGAASAPDIGELYPDNDSKFKDIDSKILLQNSVNLIRSIGFDIINADITIIAQSPKISPYKDAMAKIVADILGIPLHKVNIKATTTEHLGFIGRNEGIAANAIVNLKYFNWRNVL.

The interval 1–210 (MLDLSLIMLG…LNLNSPSNDI (210 aa)) is 2-C-methyl-D-erythritol 4-phosphate cytidylyltransferase. The tract at residues 211-372 (FCGNGFDVHA…LKYFNWRNVL (162 aa)) is 2-C-methyl-D-erythritol 2,4-cyclodiphosphate synthase. A divalent metal cation is bound by residues Asp-217 and His-219. Residues 217-219 (DVH) and 243-244 (HS) contribute to the 4-CDP-2-C-methyl-D-erythritol 2-phosphate site. His-251 is an a divalent metal cation binding site. 4-CDP-2-C-methyl-D-erythritol 2-phosphate-binding positions include 265–267 (DIG), 270–274 (YPDND), 341–344 (TTTE), Phe-348, and Arg-351.

This sequence in the N-terminal section; belongs to the IspD/TarI cytidylyltransferase family. IspD subfamily. The protein in the C-terminal section; belongs to the IspF family. A divalent metal cation serves as cofactor.

It carries out the reaction 2-C-methyl-D-erythritol 4-phosphate + CTP + H(+) = 4-CDP-2-C-methyl-D-erythritol + diphosphate. The enzyme catalyses 4-CDP-2-C-methyl-D-erythritol 2-phosphate = 2-C-methyl-D-erythritol 2,4-cyclic diphosphate + CMP. It functions in the pathway isoprenoid biosynthesis; isopentenyl diphosphate biosynthesis via DXP pathway; isopentenyl diphosphate from 1-deoxy-D-xylulose 5-phosphate: step 2/6. It participates in isoprenoid biosynthesis; isopentenyl diphosphate biosynthesis via DXP pathway; isopentenyl diphosphate from 1-deoxy-D-xylulose 5-phosphate: step 4/6. Functionally, bifunctional enzyme that catalyzes the formation of 4-diphosphocytidyl-2-C-methyl-D-erythritol from CTP and 2-C-methyl-D-erythritol 4-phosphate (MEP) (IspD), and catalyzes the conversion of 4-diphosphocytidyl-2-C-methyl-D-erythritol 2-phosphate (CDP-ME2P) to 2-C-methyl-D-erythritol 2,4-cyclodiphosphate (ME-CPP) with a corresponding release of cytidine 5-monophosphate (CMP) (IspF). The polypeptide is Bifunctional enzyme IspD/IspF (Campylobacter fetus subsp. fetus (strain 82-40)).